Reading from the N-terminus, the 248-residue chain is Protein G1-like6 (248 aa).

The span at Met1 to Met15 shows a compositional bias: basic residues. Disordered stretches follow at residues Met1 to Gln35, Gly50 to Gln84, and Ala198 to Pro248. The span at Ser17–Gly32 shows a compositional bias: gly residues. Positions Gly50–Gly59 are enriched in low complexity. The segment covering Thr60–Pro69 has biased composition (gly residues). Positions Ser70–Ser79 are enriched in low complexity. In terms of domain architecture, ALOG spans Arg80 to Lys207. Positions Lys205 to Lys209 match the Nuclear localization signal motif. Composition is skewed to low complexity over residues Ser212–Gly224 and Thr239–Pro248.

This sequence belongs to the plant homeotic and developmental regulators ALOG protein family.

Its subcellular location is the nucleus. In terms of biological role, probable transcription regulator that acts as a developmental regulator by promoting cell growth in response to light. This Oryza sativa subsp. indica (Rice) protein is Protein G1-like6.